A 150-amino-acid polypeptide reads, in one-letter code: Ribonuclease pancreatic delta-type (150 aa).

Residues 1–25 form the signal peptide; it reads MGLEKSFILFSLLVLVLGWVQPSLG. Arg-35 serves as a coordination point for substrate. His-37 (proton acceptor) is an active-site residue. 3 disulfides stabilise this stretch: Cys-51–Cys-110, Cys-65–Cys-121, and Cys-83–Cys-136. Substrate contacts are provided by residues 66–70, Lys-91, and Arg-111; that span reads KRVNT. Catalysis depends on His-145, which acts as the Proton donor.

It belongs to the pancreatic ribonuclease family. As to quaternary structure, monomer.

It is found in the secreted. The enzyme catalyses an [RNA] containing cytidine + H2O = an [RNA]-3'-cytidine-3'-phosphate + a 5'-hydroxy-ribonucleotide-3'-[RNA].. It carries out the reaction an [RNA] containing uridine + H2O = an [RNA]-3'-uridine-3'-phosphate + a 5'-hydroxy-ribonucleotide-3'-[RNA].. In terms of biological role, endonuclease that catalyzes the cleavage of RNA on the 3' side of pyrimidine nucleotides. Acts on single-stranded and double-stranded RNA. This is Ribonuclease pancreatic delta-type from Rattus rattus (Black rat).